The primary structure comprises 317 residues: tRNA(Met) cytidine acetate ligase (317 aa).

ATP contacts are provided by residues Ile-6 to Gln-19, Gly-100, Asn-157, and Arg-182.

It belongs to the TmcAL family.

The protein localises to the cytoplasm. The catalysed reaction is cytidine(34) in elongator tRNA(Met) + acetate + ATP = N(4)-acetylcytidine(34) in elongator tRNA(Met) + AMP + diphosphate. Its function is as follows. Catalyzes the formation of N(4)-acetylcytidine (ac(4)C) at the wobble position of elongator tRNA(Met), using acetate and ATP as substrates. First activates an acetate ion to form acetyladenylate (Ac-AMP) and then transfers the acetyl group to tRNA to form ac(4)C34. This is tRNA(Met) cytidine acetate ligase from Mesomycoplasma hyopneumoniae (strain J / ATCC 25934 / NCTC 10110) (Mycoplasma hyopneumoniae).